Reading from the N-terminus, the 197-residue chain is MKCYKSSSILSTNHHPFFYKQQPISSLQPTSIPTTISYPTRTRFSSTRIQSRLTHDDPVKQSEDLSFYDLLGVTESVTLPEIKQAYKQLARKYHPDVSPPDRVEEYTDRFIRVQEAYETLSDPRRRVLYDRDLSMGFSFSFSGRRQNRYDQEVVEEKSEWKAKWQTQLSGLRRRSNQKDNNTMSWAARMRRQQQESS.

The transit peptide at 1 to 60 (MKCYKSSSILSTNHHPFFYKQQPISSLQPTSIPTTISYPTRTRFSSTRIQSRLTHDDPVK) directs the protein to the chloroplast. The region spanning 66 to 133 (SFYDLLGVTE…RRRVLYDRDL (68 aa)) is the J domain. The disordered stretch occupies residues 169 to 197 (SGLRRRSNQKDNNTMSWAARMRRQQQESS).

The protein belongs to the DnaJ family. C/III subfamily. In terms of tissue distribution, light-grown seedlings.

It localises to the plastid. It is found in the chloroplast. Functionally, plays a continuous role in plant development probably in the structural organization of compartments. The polypeptide is Chaperone protein dnaJ 20, chloroplastic (ATJ20) (Arabidopsis thaliana (Mouse-ear cress)).